We begin with the raw amino-acid sequence, 605 residues long: Glucose oxidase (605 aa).

The N-terminal stretch at 1–16 (MQTLLVSSLVVSLAAA) is a signal peptide. Residues Leu51 and Thr52 each coordinate FAD. Asn65 carries N-linked (GlcNAc...) asparagine glycosylation. An FAD-binding site is contributed by Glu72. Asn111 carries N-linked (GlcNAc...) asparagine glycosylation. The FAD site is built by Ser125, Asn129, Gly130, and Thr132. N-linked (GlcNAc...) asparagine glycosylation is found at Asn183 and Asn190. Cys186 and Cys228 are oxidised to a cystine. Val272 serves as a coordination point for FAD. Asn280, Asn377, Asn410, and Asn495 each carry an N-linked (GlcNAc...) asparagine glycan. His538 (proton acceptor) is an active-site residue. O2 contacts are provided by Arg559 and Val560. FAD is bound by residues Gly571 and Met583.

The protein belongs to the GMC oxidoreductase family. As to quaternary structure, homodimer. FAD serves as cofactor. The N-linked sugar chains of the glucose oxidase contributed to the high solubility of the enzyme in water.

It is found in the secreted. The protein resides in the cell wall. It localises to the cytoplasm. Its subcellular location is the extracellular space. The protein localises to the extracellular matrix. It catalyses the reaction beta-D-glucose + O2 = D-glucono-1,5-lactone + H2O2. Functionally, glucose oxidase catalyzes the oxidation of beta-D-glucose to D-glucono-delta-lactone and hydrogen peroxide in the presence of molecular oxygen. D-glucono-delta-lactone is sequentially hydrolyzed by lactonase to D-gluconic acid, and the resulting hydrogen peroxide is hydrolyzed by catalase to oxygen and water. The activity shows high specificity to beta-D-glucose, with very low to no activity towards L-glucose, 2-deoxy-D-glucose, 3-deoxy-D-glucose, 4-deoxy-D-glucose, 5-deoxy-D-glucose, 6-deoxy-D-glucose, 3-O-methyl-D-glucose, 4-O-methyl-D-glucose, 6-O-methyl-D-glucose, 4,6-O-benzylidene-D-glucose, 5-thio-5-deoxy-D-glucose, D-mannose, D-allose, D-galactose, D-fructose, D-arabinose, D-xylose, trehalose, melibiose, L-mannomethylose, lactose, sucrose or 1,5-anhydro-D-glucitol. This chain is Glucose oxidase, found in Aspergillus niger.